Consider the following 392-residue polypeptide: Sulfate adenylyltransferase (392 aa).

Belongs to the sulfate adenylyltransferase family.

The catalysed reaction is sulfate + ATP + H(+) = adenosine 5'-phosphosulfate + diphosphate. It functions in the pathway sulfur metabolism; hydrogen sulfide biosynthesis; sulfite from sulfate: step 1/3. This is Sulfate adenylyltransferase from Trichormus variabilis (strain ATCC 29413 / PCC 7937) (Anabaena variabilis).